The following is a 99-amino-acid chain: Large ribosomal subunit protein eL21 (99 aa).

A compositionally biased stretch (polar residues) spans 1–14; that stretch reads MPNSNGPLSNSGGK. The tract at residues 1 to 38 is disordered; the sequence is MPNSNGPLSNSGGKLQNDPRDRGTSPPQRAIADYDDGE.

It belongs to the eukaryotic ribosomal protein eL21 family.

This chain is Large ribosomal subunit protein eL21, found in Halobacterium salinarum (strain ATCC 29341 / DSM 671 / R1).